Consider the following 741-residue polypeptide: Ethylene receptor 2 (741 aa).

3 helical membrane-spanning segments follow: residues 23-43, 53-73, and 92-112; these read ISDF…IYFV, WVLV…LINL, and IMTA…IPDL. Residues C65 and H69 each coordinate Cu cation. One can recognise a GAF domain in the interval 158–307; it reads DRHTILKTTL…VVADQVAVAL (150 aa). The region spanning 350–589 is the Histidine kinase domain; the sequence is VMNHEMRTPM…TFVVKLGIPE (240 aa). At H353 the chain carries Phosphohistidine; by autocatalysis. The Response regulatory domain maps to 615–732; that stretch reads KVLLLDDNGV…KMRNVLSNLL (118 aa). D663 is modified (4-aspartylphosphate).

It belongs to the ethylene receptor family. Homodimer; disulfide-linked. It depends on Cu cation as a cofactor. Activation probably requires a transfer of a phosphate group between a His in the transmitter domain and an Asp of the receiver domain.

It localises to the endoplasmic reticulum membrane. It carries out the reaction ATP + protein L-histidine = ADP + protein N-phospho-L-histidine.. Functionally, may act early in the ethylene signal transduction pathway, possibly as an ethylene receptor, or as a regulator of the pathway. In Pelargonium hortorum (Common geranium), this protein is Ethylene receptor 2 (ETR2).